We begin with the raw amino-acid sequence, 356 residues long: Isopentenyl-diphosphate delta-isomerase (356 aa).

Arginine 8–lysine 9 serves as a coordination point for substrate. FMN contacts are provided by residues alanine 66–threonine 68, serine 96, and asparagine 124. Position 96–98 (serine 96–arginine 98) interacts with substrate. Glutamine 160 lines the substrate pocket. Glutamate 161 serves as a coordination point for Mg(2+). FMN is bound by residues lysine 201, threonine 231, glycine 280 to arginine 282, and alanine 301 to leucine 302.

This sequence belongs to the IPP isomerase type 2 family. Homooctamer. Dimer of tetramers. It depends on FMN as a cofactor. NADPH is required as a cofactor. Requires Mg(2+) as cofactor.

The protein resides in the cytoplasm. The enzyme catalyses isopentenyl diphosphate = dimethylallyl diphosphate. Its function is as follows. Involved in the biosynthesis of isoprenoids. Catalyzes the 1,3-allylic rearrangement of the homoallylic substrate isopentenyl (IPP) to its allylic isomer, dimethylallyl diphosphate (DMAPP). This Methanococcus aeolicus (strain ATCC BAA-1280 / DSM 17508 / OCM 812 / Nankai-3) protein is Isopentenyl-diphosphate delta-isomerase.